The primary structure comprises 66 residues: Large ribosomal subunit protein bL35 (66 aa).

It belongs to the bacterial ribosomal protein bL35 family.

The polypeptide is Large ribosomal subunit protein bL35 (Acholeplasma laidlawii (strain PG-8A)).